Here is a 193-residue protein sequence, read N- to C-terminus: Xanthine phosphoribosyltransferase (193 aa).

Residues leucine 20 and asparagine 27 each contribute to the xanthine site. Residue 128-132 (ASGGT) participates in 5-phospho-alpha-D-ribose 1-diphosphate binding. Residue lysine 156 coordinates xanthine.

It belongs to the purine/pyrimidine phosphoribosyltransferase family. Xpt subfamily. As to quaternary structure, homodimer.

It is found in the cytoplasm. It catalyses the reaction XMP + diphosphate = xanthine + 5-phospho-alpha-D-ribose 1-diphosphate. It functions in the pathway purine metabolism; XMP biosynthesis via salvage pathway; XMP from xanthine: step 1/1. Functionally, converts the preformed base xanthine, a product of nucleic acid breakdown, to xanthosine 5'-monophosphate (XMP), so it can be reused for RNA or DNA synthesis. The polypeptide is Xanthine phosphoribosyltransferase (Deinococcus deserti (strain DSM 17065 / CIP 109153 / LMG 22923 / VCD115)).